The following is an 80-amino-acid chain: Metallothionein-like protein type 2, MT2-28 (80 aa).

It belongs to the metallothionein superfamily. Type 15 family.

Functionally, metallothioneins have a high content of cysteine residues that bind various heavy metals. The chain is Metallothionein-like protein type 2, MT2-28 from Brassica juncea (Indian mustard).